A 326-amino-acid polypeptide reads, in one-letter code: Thiazole synthase (326 aa).

Residue lysine 168 is the Schiff-base intermediate with DXP of the active site. 1-deoxy-D-xylulose 5-phosphate-binding positions include glycine 229, alanine 255–glycine 256, and asparagine 277–threonine 278.

It belongs to the ThiG family. In terms of assembly, homotetramer. Forms heterodimers with either ThiH or ThiS.

The protein resides in the cytoplasm. The catalysed reaction is [ThiS sulfur-carrier protein]-C-terminal-Gly-aminoethanethioate + 2-iminoacetate + 1-deoxy-D-xylulose 5-phosphate = [ThiS sulfur-carrier protein]-C-terminal Gly-Gly + 2-[(2R,5Z)-2-carboxy-4-methylthiazol-5(2H)-ylidene]ethyl phosphate + 2 H2O + H(+). It functions in the pathway cofactor biosynthesis; thiamine diphosphate biosynthesis. Catalyzes the rearrangement of 1-deoxy-D-xylulose 5-phosphate (DXP) to produce the thiazole phosphate moiety of thiamine. Sulfur is provided by the thiocarboxylate moiety of the carrier protein ThiS. In vitro, sulfur can be provided by H(2)S. The sequence is that of Thiazole synthase from Magnetococcus marinus (strain ATCC BAA-1437 / JCM 17883 / MC-1).